A 248-amino-acid polypeptide reads, in one-letter code: Myelin protein P0 (248 aa).

An N-terminal signal peptide occupies residues 1–29 (MAPGAPSSSPSPILAALLFSSLVLSPALA). In terms of domain architecture, Ig-like V-type spans 30–143 (IVVYTDREIY…DIVGKTSQVT (114 aa)). Topologically, residues 30-153 (IVVYTDREIY…LYVFEKVPTR (124 aa)) are extracellular. An intrachain disulfide couples Cys50 to Cys127. N-linked (GlcNAc...) (complex) asparagine glycosylation is present at Asn122. A helical membrane pass occupies residues 154–179 (YGVVLGAVIGGILGVVLLLLLLFYLI). Residues 180–248 (RYCWLRRQAA…GLGESRKDKK (69 aa)) lie on the Cytoplasmic side of the membrane. Position 210 is a phosphoserine; by PKC (Ser210). The tract at residues 222–248 (MLDHSRSTKAASEKKSKGLGESRKDKK) is disordered. Basic and acidic residues predominate over residues 224–248 (DHSRSTKAASEKKSKGLGESRKDKK). Residues Ser226 and Ser228 each carry the phosphoserine modification. The residue at position 233 (Ser233) is a Phosphoserine; by PKC. Residues Ser237 and Ser243 each carry the phosphoserine modification.

It belongs to the myelin P0 protein family. As to quaternary structure, homodimer and homotetramer. In terms of processing, N-glycosylated; contains sulfate-substituted glycan. In terms of tissue distribution, found only in peripheral nervous system Schwann cells.

Its subcellular location is the cell membrane. In terms of biological role, is an adhesion molecule necessary for normal myelination in the peripheral nervous system. It mediates adhesion between adjacent myelin wraps and ultimately drives myelin compaction. The chain is Myelin protein P0 (Mpz) from Mus musculus (Mouse).